The primary structure comprises 236 residues: Phosphoglycolate phosphatase (236 aa).

Aspartate 14 functions as the Nucleophile in the catalytic mechanism. Residues aspartate 14, aspartate 16, and aspartate 177 each coordinate Mg(2+).

It belongs to the HAD-like hydrolase superfamily. CbbY/CbbZ/Gph/YieH family. Mg(2+) serves as cofactor.

It carries out the reaction 2-phosphoglycolate + H2O = glycolate + phosphate. The protein operates within organic acid metabolism; glycolate biosynthesis; glycolate from 2-phosphoglycolate: step 1/1. Its function is as follows. Specifically catalyzes the dephosphorylation of 2-phosphoglycolate. Is involved in the dissimilation of the intracellular 2-phosphoglycolate formed during the DNA repair of 3'-phosphoglycolate ends, a major class of DNA lesions induced by oxidative stress. In Neisseria gonorrhoeae (strain ATCC 700825 / FA 1090), this protein is Phosphoglycolate phosphatase.